Reading from the N-terminus, the 425-residue chain is Adenosylhomocysteinase (425 aa).

Residues T60, D132, and E157 each coordinate substrate. NAD(+) is bound at residue 158–160 (TTT). Residues K187 and D191 each contribute to the substrate site. NAD(+)-binding positions include N192, 221-226 (GYGWCG), E244, N279, 300-302 (SGH), and N347.

It belongs to the adenosylhomocysteinase family. Requires NAD(+) as cofactor.

The protein localises to the cytoplasm. It catalyses the reaction S-adenosyl-L-homocysteine + H2O = L-homocysteine + adenosine. The protein operates within amino-acid biosynthesis; L-homocysteine biosynthesis; L-homocysteine from S-adenosyl-L-homocysteine: step 1/1. Functionally, may play a key role in the regulation of the intracellular concentration of adenosylhomocysteine. This chain is Adenosylhomocysteinase, found in Nostoc sp. (strain PCC 7120 / SAG 25.82 / UTEX 2576).